The chain runs to 154 residues: Putative nickel-responsive regulator (154 aa).

4 residues coordinate Ni(2+): H95, H106, H108, and C114.

The protein belongs to the transcriptional regulatory CopG/NikR family. Ni(2+) serves as cofactor.

Its function is as follows. Transcriptional regulator. This is Putative nickel-responsive regulator from Caldanaerobacter subterraneus subsp. tengcongensis (strain DSM 15242 / JCM 11007 / NBRC 100824 / MB4) (Thermoanaerobacter tengcongensis).